The chain runs to 109 residues: Nucleoid-associated protein VC_1055 (109 aa).

A disordered region spans residues 1–22; that stretch reads MFGKGGMGNLMKQAQQMQERMQ.

This sequence belongs to the YbaB/EbfC family. As to quaternary structure, homodimer.

It is found in the cytoplasm. The protein localises to the nucleoid. In terms of biological role, binds to DNA and alters its conformation. May be involved in regulation of gene expression, nucleoid organization and DNA protection. This Vibrio cholerae serotype O1 (strain ATCC 39315 / El Tor Inaba N16961) protein is Nucleoid-associated protein VC_1055.